The following is a 248-amino-acid chain: uncharacterized protein (248 aa).

Position 8–32 (8–32) interacts with NADP(+); it reads IVTGAAQGIGQAYAQALAREGASVV. Residue S143 participates in substrate binding. Residue Y153 is the Proton acceptor of the active site.

This sequence belongs to the short-chain dehydrogenases/reductases (SDR) family.

This is an uncharacterized protein from Mycobacterium tuberculosis (strain CDC 1551 / Oshkosh).